Consider the following 433-residue polypeptide: 3-phosphoshikimate 1-carboxyvinyltransferase (433 aa).

Residues K22, S23, and R27 each coordinate 3-phosphoshikimate. K22 contacts phosphoenolpyruvate. G94 and R123 together coordinate phosphoenolpyruvate. S168, Q170, D319, and K346 together coordinate 3-phosphoshikimate. Residue Q170 participates in phosphoenolpyruvate binding. Catalysis depends on D319, which acts as the Proton acceptor. Residues R350 and R392 each coordinate phosphoenolpyruvate.

It belongs to the EPSP synthase family. In terms of assembly, monomer.

Its subcellular location is the cytoplasm. It catalyses the reaction 3-phosphoshikimate + phosphoenolpyruvate = 5-O-(1-carboxyvinyl)-3-phosphoshikimate + phosphate. Its pathway is metabolic intermediate biosynthesis; chorismate biosynthesis; chorismate from D-erythrose 4-phosphate and phosphoenolpyruvate: step 6/7. Its function is as follows. Catalyzes the transfer of the enolpyruvyl moiety of phosphoenolpyruvate (PEP) to the 5-hydroxyl of shikimate-3-phosphate (S3P) to produce enolpyruvyl shikimate-3-phosphate and inorganic phosphate. This chain is 3-phosphoshikimate 1-carboxyvinyltransferase, found in Roseiflexus sp. (strain RS-1).